Consider the following 707-residue polypeptide: F-box/WD repeat-containing protein 7 (707 aa).

Residues 1 to 151 (MNQELLSVGS…SVTNSSSIVD (151 aa)) form a disordered region. S26 is modified (phosphoserine; by ATM). Over residues 57–68 (GEVVGVEPRPGG) the composition is skewed to low complexity. Residues 69-84 (QNDSQQGQLEENNNRF) show a composition bias toward polar residues. The segment covering 87-129 (VDEDSSGNQEEQEEDEEHAGEQDEEDEEEEEMDQESDDFDQSD) has biased composition (acidic residues). The span at 130–139 (DSSREDEHTH) shows a compositional bias: basic and acidic residues. Phosphothreonine is present on T205. S227 is modified (phosphoserine; by SGK1). The region spanning 278–324 (RDFISLLPKELALYVLSFLEPKDLLQAAQTCRYWRILAEDNLLWREK) is the F-box domain. 7 WD repeats span residues 378–418 (GHDD…RTLV), 420–456 (HTGG…CIHT), 459–498 (GHTS…HVLM), 500–536 (HVAA…CLHT), 539–578 (GHTN…HTLT), 580–618 (HQSL…QTLQ), and 622–659 (KHQS…FIRN).

As to quaternary structure, homodimer; homodimerization plays a role in substrate binding and/or ubiquitination and degradation. Component of the SCF(FBXW7) complex consisting of CUL1, RBX1, SKP1 and FBXW7. Interacts (via F-box domain) with SKP1. Interacts (via F-box domain) with pseudophosphatase STYX; the interaction is direct and prevents FBXW7 interaction with SKP1. Interacts with cyclin-E (CCNE1 or CCNE2). Interacts with PSEN1. Forms a trimeric complex with NOTCH1 and SGK1. Interacts with NOTCH1 intracellular domain/NICD and NOTCH4 intracellular domain/NICD. Interacts with NOTCH2 intracellular domain (N2ICD). Interacts with MYC (when phosphorylated). Interacts with USP28, counteracting ubiquitination of MYC. Interacts with JUN. Found in a complex with JUN and PRR7. Interacts with JUN and PRR7; the interaction inhibits ubiquitination-mediated JUN degradation, promoting its phosphorylation and transcriptional activity. Interacts (when phosphorylated at Thr-205) with PIN1, disrupting FBXW7 dimerization and promoting FBXW7 autoubiquitination and degradation. Interacts with UBE2QL1. Interacts with FAM83D; promotes FBXW7 degradation. Interacts with MYCN; FBXW7 competes with AURKA for binding to unphosphorylated MYCN but not for binding to phosphorylated MYCN. Interacts with STOML1. Interacts with NFE2L1. Interacts with USP36, counteracting ubiquitination of MYC. Interacts with NR1D1. Interacts with RICTOR; mediates RICTOR ubiquitination and degradation. Interacts with USP38, counteracting ubiquitination of MYC. In terms of assembly, (Microbial infection) Interacts (via WD repeats) with SV40 large T antigen (via CPD region). Post-translationally, phosphorylation at Thr-205 promotes interaction with PIN1, leading to disrupt FBXW7 dimerization and promoting FBXW7 autoubiquitination and degradation. Phosphorylated by ATM at Ser-26 in response to DNA damage, promoting recruitment to DNA damage sites and 'Lys-63'-linked ubiquitination of phosphorylated XRCC4. In terms of processing, ubiquitinated: autoubiquitinates following phosphorylation at Thr-205 and subsequent interaction with PIN1. Ubiquitination leads to its proteasomal degradation. Widely expressed. In terms of tissue distribution, expressed in brain.

It localises to the nucleus. It is found in the nucleoplasm. Its subcellular location is the chromosome. The protein resides in the cytoplasm. The protein localises to the nucleolus. Its pathway is protein modification; protein ubiquitination. Substrate recognition component of a SCF (SKP1-CUL1-F-box protein) E3 ubiquitin-protein ligase complex which mediates the ubiquitination and subsequent proteasomal degradation of target proteins. Recognizes and binds phosphorylated sites/phosphodegrons within target proteins and thereafter brings them to the SCF complex for ubiquitination. Identified substrates include cyclin-E (CCNE1 or CCNE2), DISC1, JUN, MYC, NOTCH1 released notch intracellular domain (NICD), NFE2L1, NOTCH2, MCL1, MLST8, RICTOR, and probably PSEN1. Acts as a negative regulator of JNK signaling by binding to phosphorylated JUN and promoting its ubiquitination and subsequent degradation. Involved in bone homeostasis and negative regulation of osteoclast differentiation. Regulates the amplitude of the cyclic expression of hepatic core clock genes and genes involved in lipid and glucose metabolism via ubiquitination and proteasomal degradation of their transcriptional repressor NR1D1; CDK1-dependent phosphorylation of NR1D1 is necessary for SCF(FBXW7)-mediated ubiquitination. Also able to promote 'Lys-63'-linked ubiquitination in response to DNA damage. The SCF(FBXW7) complex facilitates double-strand break repair following phosphorylation by ATM: phosphorylation promotes localization to sites of double-strand breaks and 'Lys-63'-linked ubiquitination of phosphorylated XRCC4, enhancing DNA non-homologous end joining. The protein is F-box/WD repeat-containing protein 7 of Homo sapiens (Human).